The sequence spans 214 residues: uncharacterized protein (214 aa).

A run of 7 helical transmembrane segments spans residues 4 to 23 (VSIVEIFLIISLPLLFFSSF), 35 to 57 (SFVHGAVLAVPLLLLRSFFLGYY), 67 to 89 (QWMRFFLFDYVFPLFCLPFFLFT), 96 to 118 (VSLVSGVSALFGAYTSFFFVHVY), 128 to 150 (ARVMTLVLYMTNLLQLHAHVSFS), 155 to 177 (LPLLGLIAALCIFLLMGAFSATV), and 187 to 209 (TVVYTSMLAGAGGVALLTHFFAV).

It localises to the cell membrane. This is an uncharacterized protein from Treponema pallidum (strain Nichols).